The sequence spans 513 residues: Protein CYCLOPS (513 aa).

Disordered stretches follow at residues 329–380 and 395–435; these read QGRT…STQN and DDRK…AEAK. The span at 333–347 shows a compositional bias: low complexity; that stretch reads ASGEPSQSESSAAAP. The span at 359–380 shows a compositional bias: polar residues; the sequence is PSNSNQTLGDSSWKQVGESTQN. 2 consecutive short sequence motifs (nuclear localization signal) follow at residues 397–400 and 421–424; these read RKRK and KKRR. Residues 447–513 are a coiled coil; sequence MQAILKRCEN…ERILSETGKI (67 aa).

The protein belongs to the CYCLOPS family. In terms of assembly, forms homodimers. Interacts with CCAMK. In terms of tissue distribution, highly expressed in roots. Expressed in root hairs and nodules. Not detected in leaves or flowers.

It is found in the nucleus. Involved symbiotic signaling. Required for root infection by symbiotic rhizobia, infection thread (IT) formation, and nodule development. Required for proper induction of early nodulin gene expression. Probably not involved in nodule organogenesis. Involved in arbuscular mycorrhizal (AM) symbiosis. Required for fungal infection of the outer cortical cell layers, and for arbuscule development during the AM symbiosis. Acts downstream of CCAMK. Required for symbiosome formation (i.e. the release of the bacteria from the ITs) and subsequent symbiosome development. Required for the expression of the nodule-specific RPG gene, which controls proper IT growth and is essential for symbiosome formation. Acts upstream of ERN1, a transcriptional regulator required for nodulation. This is Protein CYCLOPS from Medicago truncatula (Barrel medic).